A 525-amino-acid chain; its full sequence is MAVPHPSSSSSRSHPFLSHVYHTSFHHHHHHNHPSLVLFWCLVFSLLSPLALSSSSSSSSSSSDSSSSSSSHISLGIGETEGTKHDLHQAILRDEAVARLHELGQVSDAATHLERTFMSPASIRAIPLIRGWMEDAGLSTWVDYMGNVHGRVEPKNGSSQALLIGSHMDTVIDAGKYDGSLGIISAISALKVLKIDGRLGELKRPVEVIAFSDEEGVRFQSTFLGSAALAGIMPVSRLEVTDKSGISVQDALKENSIDITDENLMQLKYDPASVWGYVEVHIEQGPVLEWVGYPLGVVKGIAGQTRLKVTVKGSQGHAGTVPMSMRQDPMTGAAELIVLLESVCKNPKDYLSCNVQCNEDTVESLANSLVCTVGEISTWPSASNVIPGQVTFTVDLRTIDDVGRKAILHDLSTRMYQICDKRSLLCSIERKHDADAVMSDPQLSLQLKSAAQSALKKMTGEVQDEVPVLMSGAGHDAMAMAHLTKVGMLFVRCRGGISHSPAEHVLDDDVGAAGLAILEFLESQM.

An N-terminal signal peptide occupies residues 1-53; it reads MAVPHPSSSSSRSHPFLSHVYHTSFHHHHHHNHPSLVLFWCLVFSLLSPLALS. The segment covering 56 to 75 has biased composition (low complexity); sequence SSSSSSSSDSSSSSSSHISL. The segment at 56–78 is disordered; sequence SSSSSSSSDSSSSSSSHISLGIG. Residue N156 is glycosylated (N-linked (GlcNAc...) asparagine). Residues H167, D178, E215, H281, and H499 each contribute to the Mn(2+) site.

The protein belongs to the peptidase M20A family. In terms of assembly, homodimer. It depends on Mn(2+) as a cofactor. Expressed in seedlings, roots, stems, leaves, flowers, siliques and seeds.

It localises to the endoplasmic reticulum. It carries out the reaction allantoate + H2O + 2 H(+) = (S)-2-ureidoglycine + NH4(+) + CO2. Inhibited by borate, fluoride, L-Asn and L-Asp, but not by phenylphosphorodiamidate. Its function is as follows. Involved in the catabolism of purine nucleotides. Can use allantoate as substrate, but not Nalpha-carbamoyl-L-Asp, Nalpha-carbamoyl-L-Ala or Nalpha-carbamoyl-Gly. The sequential activity of AAH, UGLYAH and UAH allows a complete purine breakdown without the intermediate generation of urea. Involved in the regulation of seed maturation and seed dormancy. This is Allantoate deiminase from Arabidopsis thaliana (Mouse-ear cress).